The following is a 279-amino-acid chain: Elongation factor Ts (279 aa).

The segment at Thr80–Val83 is involved in Mg(2+) ion dislocation from EF-Tu.

This sequence belongs to the EF-Ts family.

It is found in the cytoplasm. In terms of biological role, associates with the EF-Tu.GDP complex and induces the exchange of GDP to GTP. It remains bound to the aminoacyl-tRNA.EF-Tu.GTP complex up to the GTP hydrolysis stage on the ribosome. This Borreliella burgdorferi (strain ZS7) (Borrelia burgdorferi) protein is Elongation factor Ts.